We begin with the raw amino-acid sequence, 89 residues long: Small ribosomal subunit protein uS15 (89 aa).

The protein belongs to the universal ribosomal protein uS15 family. Part of the 30S ribosomal subunit. Forms a bridge to the 50S subunit in the 70S ribosome, contacting the 23S rRNA.

One of the primary rRNA binding proteins, it binds directly to 16S rRNA where it helps nucleate assembly of the platform of the 30S subunit by binding and bridging several RNA helices of the 16S rRNA. In terms of biological role, forms an intersubunit bridge (bridge B4) with the 23S rRNA of the 50S subunit in the ribosome. The sequence is that of Small ribosomal subunit protein uS15 from Streptococcus pneumoniae (strain P1031).